The following is a 418-amino-acid chain: UDP-N-acetylglucosamine 1-carboxyvinyltransferase (418 aa).

Phosphoenolpyruvate is bound at residue 22 to 23 (KN). Residue R93 participates in UDP-N-acetyl-alpha-D-glucosamine binding. The active-site Proton donor is the C117. C117 bears the 2-(S-cysteinyl)pyruvic acid O-phosphothioketal mark. D305 and V327 together coordinate UDP-N-acetyl-alpha-D-glucosamine.

It belongs to the EPSP synthase family. MurA subfamily.

The protein localises to the cytoplasm. It carries out the reaction phosphoenolpyruvate + UDP-N-acetyl-alpha-D-glucosamine = UDP-N-acetyl-3-O-(1-carboxyvinyl)-alpha-D-glucosamine + phosphate. Its pathway is cell wall biogenesis; peptidoglycan biosynthesis. Functionally, cell wall formation. Adds enolpyruvyl to UDP-N-acetylglucosamine. The protein is UDP-N-acetylglucosamine 1-carboxyvinyltransferase of Halorhodospira halophila (strain DSM 244 / SL1) (Ectothiorhodospira halophila (strain DSM 244 / SL1)).